A 91-amino-acid polypeptide reads, in one-letter code: Probable Fe(2+)-trafficking protein (91 aa).

Belongs to the Fe(2+)-trafficking protein family.

Functionally, could be a mediator in iron transactions between iron acquisition and iron-requiring processes, such as synthesis and/or repair of Fe-S clusters in biosynthetic enzymes. The chain is Probable Fe(2+)-trafficking protein from Xanthomonas euvesicatoria pv. vesicatoria (strain 85-10) (Xanthomonas campestris pv. vesicatoria).